The primary structure comprises 335 residues: dTDP-glucose 4,6-dehydratase (335 aa).

NAD(+)-binding positions include 11 to 12 (FI), 38 to 41 (DKLT), 61 to 62 (DI), 81 to 85 (FAAET), and T100. Residue T85 coordinates substrate. Position 125 (T125) interacts with substrate. D126 functions as the Proton donor in the catalytic mechanism. Catalysis depends on proton acceptor residues E127 and Y149. 149-153 (YSASK) contacts NAD(+). N178 is a substrate binding site. N179 contacts NAD(+). Substrate-binding positions include 188 to 189 (KI), 204 to 206 (PLY), R213, N248, and 271 to 275 (DRKGH).

Belongs to the NAD(P)-dependent epimerase/dehydratase family. dTDP-glucose dehydratase subfamily. NAD(+) serves as cofactor.

It carries out the reaction dTDP-alpha-D-glucose = dTDP-4-dehydro-6-deoxy-alpha-D-glucose + H2O. Its pathway is antibiotic biosynthesis. Involved in the biosynthesis of the two 2,6-deoxysugars, dTDP-L-oleandrose and dTDP-D-desosamine, attached to the macrolactone ring oleandolide to produce the aglycone antibiotic oleandomycin. Catalyzes the dehydration of dTDP-D-glucose to form dTDP-6-deoxy-D-xylo-4-hexulose via a three-step process involving oxidation, dehydration and reduction. In Streptomyces antibioticus, this protein is dTDP-glucose 4,6-dehydratase.